Here is a 64-residue protein sequence, read N- to C-terminus: Translation machinery-associated protein 7 homolog (64 aa).

A disordered region spans residues 1-64 (MSGREGGKKK…QGGIKKSGKK (64 aa)). The span at 27–44 (VAFKQKQKEQQKALDAAK) shows a compositional bias: basic and acidic residues.

It belongs to the TMA7 family.

This Anopheles funestus (African malaria mosquito) protein is Translation machinery-associated protein 7 homolog.